Here is a 143-residue protein sequence, read N- to C-terminus: Small ribosomal subunit protein uS12 (143 aa).

A compositionally biased stretch (basic residues) spans 1–15; that stretch reads MGKCRGLRTARKLRD. The interval 1 to 27 is disordered; the sequence is MGKCRGLRTARKLRDHRREQKWHDKQY. Residues 16–27 are compositionally biased toward basic and acidic residues; it reads HRREQKWHDKQY.

It belongs to the universal ribosomal protein uS12 family. In terms of assembly, component of the 40S small ribosomal subunit.

The protein localises to the cytoplasm. The protein resides in the cytosol. Its subcellular location is the rough endoplasmic reticulum. This is Small ribosomal subunit protein uS12 (rps23) from Ictalurus punctatus (Channel catfish).